Here is a 489-residue protein sequence, read N- to C-terminus: Argininosuccinate lyase (489 aa).

The disordered stretch occupies residues M1 to H20.

The protein belongs to the lyase 1 family. Argininosuccinate lyase subfamily.

The protein resides in the cytoplasm. The catalysed reaction is 2-(N(omega)-L-arginino)succinate = fumarate + L-arginine. Its pathway is amino-acid biosynthesis; L-arginine biosynthesis; L-arginine from L-ornithine and carbamoyl phosphate: step 3/3. The sequence is that of Argininosuccinate lyase from Acidothermus cellulolyticus (strain ATCC 43068 / DSM 8971 / 11B).